A 420-amino-acid polypeptide reads, in one-letter code: RING finger protein 39 (420 aa).

The RING-type zinc-finger motif lies at 88–135 (CPLCGGSFEDPVLLACEHSFCRACLARRWGTPPATGTEASPTACPCCG). One can recognise a B30.2/SPRY domain in the interval 210–420 (DDLPEDYPVV…APLRIVPAES (211 aa)). Residues 246 to 265 (DRRSVQLAPPGTPAPPDGPK) are disordered.

The protein resides in the cytoplasm. The enzyme catalyses S-ubiquitinyl-[E2 ubiquitin-conjugating enzyme]-L-cysteine + [acceptor protein]-L-lysine = [E2 ubiquitin-conjugating enzyme]-L-cysteine + N(6)-ubiquitinyl-[acceptor protein]-L-lysine.. Its pathway is protein modification; protein ubiquitination. In terms of biological role, plays an inhibitory role in anti-RNA viral innate immunity by targeting the adapter DDX3X and promoting its 'Lys-48'-linked polyubiquitination. Alternatively, enhances the cGAS-STING pathway activation by promoting 'Lys-63'-linked ubiquitination of STING1, facilitating the STING1-TBK1 complex formation and STING1 activation. The sequence is that of RING finger protein 39 (RNF39) from Pan troglodytes (Chimpanzee).